Consider the following 352-residue polypeptide: MVFRIASSPYTHNQRQTSRIMLLVLLAAVPGIAAQLWFFGWGTLVQILLASVSTLLAEALVLKLRKQSVAATLKDNSALLTGLLLAVSIPPLAPWWMVVLGTVFAVIIAKQLYGGLGQNPFNPAMIGYVVLLISFPVQMTSWLPPHEIAVNIPGFIDAIQVIFSGHTASGGDMNTLRLGIDGISQATPLDTFKTSVRAGHSVEQIMQYPIYSGILAGAGWQWVNLAWLAGGLWLLWQKAIRWHIPLSFLVTLALCATLGWLFSPETLAAPQIHLLSGATMLGAFFILTDPVTASTTNRGRLIFGALAGLLVWLIRSFGGYPDGVAFAVLLANITVPLIDYYTRPRVYGHRKG.

4 helical membrane-spanning segments follow: residues 20-40 (IMLLVLLAAVPGIAAQLWFFG), 42-62 (GTLVQILLASVSTLLAEALVL), 89-109 (IPPLAPWWMVVLGTVFAVIIA), and 123-143 (PAMIGYVVLLISFPVQMTSWL). Threonine 187 carries the FMN phosphoryl threonine modification. The next 5 helical transmembrane spans lie at 214 to 234 (ILAGAGWQWVNLAWLAGGLWL), 242 to 262 (WHIPLSFLVTLALCATLGWLF), 267 to 287 (LAAPQIHLLSGATMLGAFFIL), 301 to 321 (LIFGALAGLLVWLIRSFGGYP), and 322 to 342 (DGVAFAVLLANITVPLIDYYT).

The protein belongs to the NqrB/RnfD family. The complex is composed of six subunits: RsxA, RsxB, RsxC, RsxD, RsxE and RsxG. It depends on FMN as a cofactor.

It localises to the cell inner membrane. Part of a membrane-bound complex that couples electron transfer with translocation of ions across the membrane. Required to maintain the reduced state of SoxR. The chain is Ion-translocating oxidoreductase complex subunit D from Shigella sonnei (strain Ss046).